Here is a 133-residue protein sequence, read N- to C-terminus: Small ribosomal subunit protein uS9 (133 aa).

Belongs to the universal ribosomal protein uS9 family.

The protein is Small ribosomal subunit protein uS9 of Picrophilus torridus (strain ATCC 700027 / DSM 9790 / JCM 10055 / NBRC 100828 / KAW 2/3).